Here is a 292-residue protein sequence, read N- to C-terminus: MAEKQQAVTEFYNNTSPRGAWEFLLGDHLHEGFYDPGTTATISGSQAAAARMIDEALRFANIYDDPSKKPKNMLDIGCGVGGTCVHVAKQYGIQCKGITLSPEEVKCAQGIAKAQGLEEKVSFDVGDALNLPYKDGTFDLVLTIECIEHVQDKEKFIREMIRVAAPGAPIVILSYAHRNLSPSAESLKPDEKKVLKKICDNLALSCLCSSADFVRWLTQLPAEDIKTADWTQNTSPFFPLLMKETFTWKGFTSLLMKGGWTAIKELLALRMMSKAADDGLLKFVAITCRKSK.

The segment at 71-80 (KNMLDIGCGV) is SAM motif I. Positions 134–142 (KDGTFDLVL) are SAM motif II. The Vacuolar targeting signal signature appears at 135–141 (DGTFDLV). An SAM motif III region spans residues 161–170 (IRVAAPGAPI).

The protein belongs to the class I-like SAM-binding methyltransferase superfamily. gTMT family. As to quaternary structure, homodimer. In terms of tissue distribution, mainly expressed in mature roots and, to a lesser extent, in leaves, stems and flowers.

It localises to the vacuole membrane. The catalysed reaction is norajmaline + S-adenosyl-L-methionine = ajmaline + S-adenosyl-L-homocysteine + H(+). It carries out the reaction 4-methylnorajmaline + S-adenosyl-L-methionine = 4-methylajmaline + S-adenosyl-L-homocysteine + H(+). It functions in the pathway alkaloid biosynthesis; ajmaline biosynthesis. In terms of biological role, N-methyltransferase involved in the biosynthesis of ajmaline-type monoterpenoid indole alkaloids (MIAs) natural products, important plant-derived pharmaceuticals used in the therapy of heart disorders. Catalyzes the indole N-methylation of norajmaline to produce ajmaline. Also able, with a lower efficiency, to mediates the conversion of 4-methylnorajmaline to 4-methylajmaline. The sequence is that of Norajmaline N-methyltransferase from Rauvolfia serpentina (Serpentine wood).